A 302-amino-acid polypeptide reads, in one-letter code: Paired immunoglobulin-like type 2 receptor alpha (302 aa).

A signal peptide spans 1–31; that stretch reads MALLISLPGGTPAMAQILLLLSSACLHAGNS. Residues 32–198 lie on the Extracellular side of the membrane; that stretch reads ERSNRKNGFG…GGLDLQTTVG (167 aa). N-linked (GlcNAc...) asparagine glycosylation is found at N90 and N107. The helical transmembrane segment at 199–219 threads the bilayer; the sequence is LATAAAVFLVGVLGLIVFLWW. The Cytoplasmic segment spans residues 220 to 302; it reads KRRRQGQKTK…ETVYSIVKAK (83 aa). Residues 228-248 show a composition bias toward basic and acidic residues; the sequence is TKAEIPAREPLETSEKHESVG. Residues 228 to 293 form a disordered region; sequence TKAEIPAREP…LPVHGNPQEE (66 aa). 2 short sequence motifs (ITIM motif) span residues 265–270 and 294–299; these read IVYASI and TVYSIV. Residues 270–280 show a composition bias toward polar residues; that stretch reads ISLSSPTSPGT.

As to quaternary structure, interacts with CD99. Phosphorylated on tyrosine residues.

The protein resides in the membrane. Paired receptors consist of highly related activating and inhibitory receptors and are widely involved in the regulation of the immune system. Receptor for CD99 and PIANP. The sequence is that of Paired immunoglobulin-like type 2 receptor alpha (Pilra) from Mus musculus (Mouse).